We begin with the raw amino-acid sequence, 351 residues long: tRNA-specific 2-thiouridylase MnmA 2 (351 aa).

ATP is bound by residues 13 to 20 (GMSGGTDS) and Phe-39. The active-site Nucleophile is the Cys-98. A disulfide bridge links Cys-98 with Cys-195. Gly-122 contributes to the ATP binding site. Positions 144–146 (KDQ) are interaction with tRNA. Cys-195 functions as the Cysteine persulfide intermediate in the catalytic mechanism. The tract at residues 301-302 (RY) is interaction with tRNA.

Belongs to the MnmA/TRMU family.

It localises to the cytoplasm. It carries out the reaction S-sulfanyl-L-cysteinyl-[protein] + uridine(34) in tRNA + AH2 + ATP = 2-thiouridine(34) in tRNA + L-cysteinyl-[protein] + A + AMP + diphosphate + H(+). Catalyzes the 2-thiolation of uridine at the wobble position (U34) of tRNA, leading to the formation of s(2)U34. The polypeptide is tRNA-specific 2-thiouridylase MnmA 2 (Phocaeicola vulgatus (strain ATCC 8482 / DSM 1447 / JCM 5826 / CCUG 4940 / NBRC 14291 / NCTC 11154) (Bacteroides vulgatus)).